We begin with the raw amino-acid sequence, 157 residues long: 6,7-dimethyl-8-ribityllumazine synthase 1 (157 aa).

5-amino-6-(D-ribitylamino)uracil-binding positions include Phe22, Ala53–Glu55, and Thr82–Ile84. Glu87–Thr88 contributes to the (2S)-2-hydroxy-3-oxobutyl phosphate binding site. His90 (proton donor) is an active-site residue. Asn115 is a 5-amino-6-(D-ribitylamino)uracil binding site. His129 contacts (2S)-2-hydroxy-3-oxobutyl phosphate.

Belongs to the DMRL synthase family. In terms of assembly, homopentamer.

The catalysed reaction is (2S)-2-hydroxy-3-oxobutyl phosphate + 5-amino-6-(D-ribitylamino)uracil = 6,7-dimethyl-8-(1-D-ribityl)lumazine + phosphate + 2 H2O + H(+). It functions in the pathway cofactor biosynthesis; riboflavin biosynthesis; riboflavin from 2-hydroxy-3-oxobutyl phosphate and 5-amino-6-(D-ribitylamino)uracil: step 1/2. Its function is as follows. Catalyzes the formation of 6,7-dimethyl-8-ribityllumazine by condensation of 5-amino-6-(D-ribitylamino)uracil with 3,4-dihydroxy-2-butanone 4-phosphate. This is the penultimate step in the biosynthesis of riboflavin. This Brucella abortus (strain 2308) protein is 6,7-dimethyl-8-ribityllumazine synthase 1 (ribH1).